We begin with the raw amino-acid sequence, 815 residues long: Lon protease 2 (815 aa).

The Lon N-terminal domain maps to 19–212 (LPVLPLINTV…RLSVVLSQEI (194 aa)). Residue 365–372 (GPPGVGKT) coordinates ATP. Residues 601–782 (RDEIGVATGM…DEVLPIAFVS (182 aa)) form the Lon proteolytic domain. Residues Ser-688 and Lys-731 contribute to the active site.

This sequence belongs to the peptidase S16 family. As to quaternary structure, homohexamer. Organized in a ring with a central cavity.

It is found in the cytoplasm. It carries out the reaction Hydrolysis of proteins in presence of ATP.. Its function is as follows. ATP-dependent serine protease that mediates the selective degradation of mutant and abnormal proteins as well as certain short-lived regulatory proteins. Required for cellular homeostasis and for survival from DNA damage and developmental changes induced by stress. Degrades polypeptides processively to yield small peptide fragments that are 5 to 10 amino acids long. Binds to DNA in a double-stranded, site-specific manner. This Herpetosiphon aurantiacus (strain ATCC 23779 / DSM 785 / 114-95) protein is Lon protease 2.